The following is a 397-amino-acid chain: Class V chitinase CHIT5 (397 aa).

An N-terminal signal peptide occupies residues 1–18 (MIIKLLVALIHYLHETMA). The 344-residue stretch at 54-397 (GVRAAYWPAW…SKQASNAWGY (344 aa)) folds into the GH18 domain. N-linked (GlcNAc...) asparagine glycans are attached at residues asparagine 128 and asparagine 147. Glutamate 166 serves as the catalytic Proton donor. Asparagine 193, asparagine 209, asparagine 247, and asparagine 261 each carry an N-linked (GlcNAc...) asparagine glycan.

This sequence belongs to the glycosyl hydrolase 18 family. Chitinase class V subfamily.

The catalysed reaction is Random endo-hydrolysis of N-acetyl-beta-D-glucosaminide (1-&gt;4)-beta-linkages in chitin and chitodextrins.. The protein operates within glycan degradation; chitin degradation. Possesses chitinase activity in vitro toward glycol chitin, carboxymethyl-chitin, colloidal chitin, and the chitin oligosaccharides (N-acetylglucosamine) (GlcNAc)6 and (GlcNAc)5. Hydrolyzes (GlcNAc)6 into (GlcNAc)4 and (GlcNAc)2, or two (GlcNAc)3 molecules. Has the capacity to inhibit hyphal growth of the fungus Trichoderma viride in an agar-plate bioassay. Involved in symbiotic signaling. Required for root hair infection threads (ITs) elongation and nodule development. Possesses Nod factor (NF) hydrolase activity. NFs are lipo-chitooligosaccharide signaling molecules produced by nitrogen-fixing rhizobia to initiate nodulation (symbiosis) on the roots of legumes. Modulates NF levels and signaling to complete transition of infected nodules to functional nitrogen-fixing organs. The protein is Class V chitinase CHIT5 of Lotus japonicus (Lotus corniculatus var. japonicus).